A 101-amino-acid chain; its full sequence is MMLEHVLVLSAYLFSIGIYGLITSRNMVRALMCLELILNAVNINLVTFSDFFDNRQLKGNIFSIFVIAIAAAEAAIGLAIVSSIYRNRKSTRINQSNLLNK.

3 helical membrane-spanning segments follow: residues methionine 2–isoleucine 22, methionine 32–phenylalanine 52, and isoleucine 61–valine 81.

The protein belongs to the complex I subunit 4L family. NDH is composed of at least 16 different subunits, 5 of which are encoded in the nucleus.

It localises to the plastid. It is found in the chloroplast thylakoid membrane. It carries out the reaction a plastoquinone + NADH + (n+1) H(+)(in) = a plastoquinol + NAD(+) + n H(+)(out). The catalysed reaction is a plastoquinone + NADPH + (n+1) H(+)(in) = a plastoquinol + NADP(+) + n H(+)(out). In terms of biological role, NDH shuttles electrons from NAD(P)H:plastoquinone, via FMN and iron-sulfur (Fe-S) centers, to quinones in the photosynthetic chain and possibly in a chloroplast respiratory chain. The immediate electron acceptor for the enzyme in this species is believed to be plastoquinone. Couples the redox reaction to proton translocation, and thus conserves the redox energy in a proton gradient. This is NAD(P)H-quinone oxidoreductase subunit 4L, chloroplastic from Cicer arietinum (Chickpea).